The primary structure comprises 337 residues: Exopolysaccharide phosphotransferase cps2G (337 aa).

It belongs to the stealth family.

The chain is Exopolysaccharide phosphotransferase cps2G (cps2G) from Lactiplantibacillus plantarum (strain ATCC BAA-793 / NCIMB 8826 / WCFS1) (Lactobacillus plantarum).